Consider the following 674-residue polypeptide: MPSATSTNGANGNGNGNGASASPAPGNLSANDNIRRFAAPSRPLSPLPAHALFNEKTRCFVYGLQPRAVQGMLDFDFICKRSTPSVAGIIYTFGGQFVSKMYWGTSETLLPVYQEVQKAIAKHPDVDVVVNFASSRSVYSSTMELMEHPQIKTIAIIAEGVPERRAREIAYVAKKKGITIIGPATVGGIKPGCFKIGNTGGMMDNIVASKLYRKGSVGYVSKSGGMSNELNNIISQTTDGVYEGVAIGGDRYPGTTFIDHLLRYQADPACKILVLLGEVGGVEEYKVIEAVKQGIITKPIVAWAIGTCASMFKTEVQFGHAGAFANSQLETAATKNKSMREAGFYVPDTFEDMPALLKQVYDKLVADGTIVPAPEPVVPKIPIDYSWAQELGLIRKPAAFISTISDDRGQELLYAGMPISDVFREEIGIGGVMSLLWFRRRLPDYAAKFLEMVLMLTADHGPAVSGAMNTIITTRAGKDLISSLVAGLLTIGSRFGGALDGAAEEFTKAFDKGLSPREFVDTMRKQNKLIPGIGHRVKSRNNPDLRVELVKEYVKAKFPSSKLLDYALAVETVTTSKKDNLILNVDGCIAVCFVDLLRNCGAFSTEEAEDYLSMGVLNGLFVLGRSIGLIAHYLDQKRLRTGLYRHPWDDITYLLPSLQQPGPPGTEGRVEVQI.

The segment covering 1–10 (MPSATSTNGA) has biased composition (low complexity). The disordered stretch occupies residues 1–26 (MPSATSTNGANGNGNGNGASASPAPG). ATP contacts are provided by residues 261–281 (LLRY…EVGG) and 312–338 (FKTE…KNKS). Glu-278 contributes to the Mg(2+) binding site. The active-site Tele-phosphohistidine intermediate is His-320. 339 to 349 (MREAGFYVPDT) contacts CoA.

This sequence belongs to the succinate/malate CoA ligase alpha subunit family. As to quaternary structure, composed of two subunits.

The protein resides in the cytoplasm. The catalysed reaction is oxaloacetate + acetyl-CoA + ADP + phosphate = citrate + ATP + CoA. Its function is as follows. Catalyzes the formation of cytosolic acetyl-CoA, which is mainly used for the biosynthesis of fatty acids and sterols. The protein is ATP-citrate synthase subunit 1 (ACL1) of Sordaria macrospora (strain ATCC MYA-333 / DSM 997 / K(L3346) / K-hell).